A 241-amino-acid chain; its full sequence is Homeobox protein TGIF2LX (241 aa).

2 disordered regions span residues 1–58 and 125–207; these read MEAA…GNLP and KTGK…ELVS. Positions 10–39 are enriched in polar residues; it reads ETQSPVQKDSPAKTQSPAQDTSIMSRNNAD. The homeobox; TALE-type DNA-binding region spans 48–111; the sequence is EHKKKRKGNL…INARRRILPD (64 aa).

It belongs to the TALE/TGIF homeobox family.

The protein resides in the nucleus. Functionally, may have a transcription role in testis. This is Homeobox protein TGIF2LX (TGIF2LX) from Pan troglodytes (Chimpanzee).